The primary structure comprises 172 residues: Protein-export protein SecB (172 aa).

This sequence belongs to the SecB family. Homotetramer, a dimer of dimers. One homotetramer interacts with 1 SecA dimer.

It is found in the cytoplasm. One of the proteins required for the normal export of preproteins out of the cell cytoplasm. It is a molecular chaperone that binds to a subset of precursor proteins, maintaining them in a translocation-competent state. It also specifically binds to its receptor SecA. This is Protein-export protein SecB from Haemophilus ducreyi (strain 35000HP / ATCC 700724).